A 339-amino-acid polypeptide reads, in one-letter code: MNYSIRLFKIMGIPIELHITFILFLVVIIGLSIMNNSIFWAVLFILLFVSVVLHELGHSYVAKKYGVKIEKILLLPIGGVAMMDKIPKEGELRIGIAGPLVSFIIGIVLLIVSQFFDININGYPLLYTLSLLNLMLGGFNLIPAFPMDGGRILRAILSKKYGYLKSTKIAANIGKSLALIMLLFGLLSMNIILILVSLFVYFGAEQESRVVEVETIFKNIKAKDIMTPNPVYVTPDMSIEEFLDFMLKHKYFGYPVVENGKLVGCIGIGNIHKKEGTVRDYMEKPVVVSEDTDIKEILRKMANTDRVFVVEGGKLKGIISKTDILRAMSILELKEELKD.

The next 2 helical transmembrane spans lie at 10-30 and 33-53; these read IMGI…VIIG and IMNN…SVVL. A Zn(2+)-binding site is contributed by histidine 54. Glutamate 55 is an active-site residue. Residue histidine 58 coordinates Zn(2+). Transmembrane regions (helical) follow at residues 96–116 and 125–145; these read IAGP…SQFF and LLYT…IPAF. Position 148 (aspartate 148) interacts with Zn(2+). A run of 2 helical transmembrane segments spans residues 180 to 200 and 251 to 271; these read IMLL…SLFV and YFGY…IGNI. CBS domains are found at residues 226–281 and 281–335; these read MTPN…VRDY and YMEK…ELKE.

This sequence belongs to the peptidase M50B family. As to quaternary structure, monomer. It depends on Zn(2+) as a cofactor.

The protein localises to the cell membrane. With respect to regulation, inhibited by 1,10-phenanthroline. A site-2 regulated intramembrane protease (S2P) that cleaves type-2 transmembrane proteins within their membrane-spanning domains; its endogenous substrate is unknown. Regulated intramembrane proteolysis (RIP) occurs when an extracytoplasmic signal triggers a concerted proteolytic cascade to transmit information and elicit cellular responses. A membrane-spanning regulatory substrate protein is first cut extracytoplasmically (site-1 protease, S1P), then within the membrane itself (site-2 protease, S2P, this enzyme), while cytoplasmic proteases finish degrading the regulatory protein, liberating the effector protein. Possible signals, S1P and substrates are unknown in this organism. The chain is Zinc metalloprotease MJ0392 from Methanocaldococcus jannaschii (strain ATCC 43067 / DSM 2661 / JAL-1 / JCM 10045 / NBRC 100440) (Methanococcus jannaschii).